We begin with the raw amino-acid sequence, 441 residues long: Glutamate-1-semialdehyde 2,1-aminomutase (441 aa).

The residue at position 275 (Lys-275) is an N6-(pyridoxal phosphate)lysine.

It belongs to the class-III pyridoxal-phosphate-dependent aminotransferase family. HemL subfamily. As to quaternary structure, homodimer. The cofactor is pyridoxal 5'-phosphate.

It is found in the cytoplasm. It catalyses the reaction (S)-4-amino-5-oxopentanoate = 5-aminolevulinate. Its pathway is porphyrin-containing compound metabolism; protoporphyrin-IX biosynthesis; 5-aminolevulinate from L-glutamyl-tRNA(Glu): step 2/2. The chain is Glutamate-1-semialdehyde 2,1-aminomutase from Deinococcus deserti (strain DSM 17065 / CIP 109153 / LMG 22923 / VCD115).